We begin with the raw amino-acid sequence, 136 residues long: Small ribosomal subunit protein uS12 (136 aa).

The interval 1-28 (MPTIQQLIRSERQELKKKTKSPALKSCP) is disordered. Position 89 is a 3-methylthioaspartic acid (aspartate 89). The segment at 101–136 (TLDTAGVKDRKQGRSKYGAKRPKPGAASTASTGKKR) is disordered. Over residues 113 to 123 (GRSKYGAKRPK) the composition is skewed to basic residues.

Belongs to the universal ribosomal protein uS12 family. Part of the 30S ribosomal subunit. Contacts proteins S8 and S17. May interact with IF1 in the 30S initiation complex.

Its function is as follows. With S4 and S5 plays an important role in translational accuracy. In terms of biological role, interacts with and stabilizes bases of the 16S rRNA that are involved in tRNA selection in the A site and with the mRNA backbone. Located at the interface of the 30S and 50S subunits, it traverses the body of the 30S subunit contacting proteins on the other side and probably holding the rRNA structure together. The combined cluster of proteins S8, S12 and S17 appears to hold together the shoulder and platform of the 30S subunit. This Cyanothece sp. (strain PCC 7425 / ATCC 29141) protein is Small ribosomal subunit protein uS12.